A 435-amino-acid chain; its full sequence is Ribulose bisphosphate carboxylase large chain (435 aa).

Position 5 is an N6,N6,N6-trimethyllysine (K5). The substrate site is built by N114 and T164. The active-site Proton acceptor is K166. K168 contacts substrate. 3 residues coordinate Mg(2+): K192, D194, and E195. K192 carries the post-translational modification N6-carboxylysine. H285 acts as the Proton acceptor in catalysis. Substrate-binding residues include R286, H318, and S370.

The protein belongs to the RuBisCO large chain family. Type I subfamily. As to quaternary structure, heterohexadecamer of 8 large chains and 8 small chains; disulfide-linked. The disulfide link is formed within the large subunit homodimers. Requires Mg(2+) as cofactor. The disulfide bond which can form in the large chain dimeric partners within the hexadecamer appears to be associated with oxidative stress and protein turnover.

It is found in the plastid. The protein localises to the chloroplast. The enzyme catalyses 2 (2R)-3-phosphoglycerate + 2 H(+) = D-ribulose 1,5-bisphosphate + CO2 + H2O. It catalyses the reaction D-ribulose 1,5-bisphosphate + O2 = 2-phosphoglycolate + (2R)-3-phosphoglycerate + 2 H(+). RuBisCO catalyzes two reactions: the carboxylation of D-ribulose 1,5-bisphosphate, the primary event in carbon dioxide fixation, as well as the oxidative fragmentation of the pentose substrate in the photorespiration process. Both reactions occur simultaneously and in competition at the same active site. The protein is Ribulose bisphosphate carboxylase large chain of Drosera burmannii (Burmese sundew).